The sequence spans 436 residues: 3-ketoacyl-CoA thiolase (436 aa).

Cys-99 (acyl-thioester intermediate) is an active-site residue. Active-site proton acceptor residues include His-392 and Cys-422.

The protein belongs to the thiolase-like superfamily. Thiolase family. Heterotetramer of two alpha chains (FadJ) and two beta chains (FadI).

The protein localises to the cytoplasm. The enzyme catalyses an acyl-CoA + acetyl-CoA = a 3-oxoacyl-CoA + CoA. Its pathway is lipid metabolism; fatty acid beta-oxidation. In terms of biological role, catalyzes the final step of fatty acid oxidation in which acetyl-CoA is released and the CoA ester of a fatty acid two carbons shorter is formed. This is 3-ketoacyl-CoA thiolase from Shigella boydii serotype 4 (strain Sb227).